Consider the following 494-residue polypeptide: Glutamyl-tRNA reductase (494 aa).

Substrate-binding positions include 58-61 (TCNR), serine 118, 123-125 (EQQ), and glutamine 129. Residue cysteine 59 is the Nucleophile of the active site. 205-210 (GAGAMA) is an NADP(+) binding site. The segment at 448–494 (KGANAGSGQRKKQKPQENRVSTARAVYRSTYQDLTQASTPGGKDDDQ) is disordered. Positions 476–486 (STYQDLTQAST) are enriched in polar residues.

The protein belongs to the glutamyl-tRNA reductase family. In terms of assembly, homodimer.

The catalysed reaction is (S)-4-amino-5-oxopentanoate + tRNA(Glu) + NADP(+) = L-glutamyl-tRNA(Glu) + NADPH + H(+). The protein operates within porphyrin-containing compound metabolism; protoporphyrin-IX biosynthesis; 5-aminolevulinate from L-glutamyl-tRNA(Glu): step 1/2. Its function is as follows. Catalyzes the NADPH-dependent reduction of glutamyl-tRNA(Glu) to glutamate 1-semialdehyde (GSA). This chain is Glutamyl-tRNA reductase, found in Corynebacterium urealyticum (strain ATCC 43042 / DSM 7109).